A 101-amino-acid polypeptide reads, in one-letter code: NAD(P)H-quinone oxidoreductase subunit 4L, chloroplastic (101 aa).

The next 3 helical transmembrane spans lie at 2–22 (MTEYVLILSAYLFSIGIYGLI), 32–52 (MCLELILNAVNMNLVTFSDLF), and 61–81 (IFSIFVIAIAAAEAAIGPAIV).

It belongs to the complex I subunit 4L family. In terms of assembly, NDH is composed of at least 16 different subunits, 5 of which are encoded in the nucleus.

The protein resides in the plastid. Its subcellular location is the chloroplast thylakoid membrane. The enzyme catalyses a plastoquinone + NADH + (n+1) H(+)(in) = a plastoquinol + NAD(+) + n H(+)(out). The catalysed reaction is a plastoquinone + NADPH + (n+1) H(+)(in) = a plastoquinol + NADP(+) + n H(+)(out). Its function is as follows. NDH shuttles electrons from NAD(P)H:plastoquinone, via FMN and iron-sulfur (Fe-S) centers, to quinones in the photosynthetic chain and possibly in a chloroplast respiratory chain. The immediate electron acceptor for the enzyme in this species is believed to be plastoquinone. Couples the redox reaction to proton translocation, and thus conserves the redox energy in a proton gradient. In Calycanthus floridus var. glaucus (Eastern sweetshrub), this protein is NAD(P)H-quinone oxidoreductase subunit 4L, chloroplastic.